Here is a 141-residue protein sequence, read N- to C-terminus: Antifungal protein ginkbilobin-like protein 1 (141 aa).

Residues 1–32 (MSISSKFQLRSSTSLLLLVALMVVMGMDGAAA) form the signal peptide. The region spanning 36–141 (TNFVSSACNT…CFIQYEQHSF (106 aa)) is the Gnk2-homologous domain. 3 disulfides stabilise this stretch: C43–C119, C95–C104, and C107–C132. An alpha-D-mannopyranose-binding site is contributed by N44. The alpha-D-mannopyranose site is built by R126 and E137.

Exerts antifungal activity through its carbohydrate-binding specificity. The protein is Antifungal protein ginkbilobin-like protein 1 of Picea glauca (White spruce).